The sequence spans 632 residues: Effector protein hopAD1 (632 aa).

A disordered region spans residues threonine 13 to arginine 34. Positions valine 15–lysine 32 are enriched in polar residues.

It localises to the secreted. The sequence is that of Effector protein hopAD1 (hopAD1) from Pseudomonas syringae pv. tomato (strain ATCC BAA-871 / DC3000).